The following is an 83-amino-acid chain: NAD(P)H-quinone oxidoreductase subunit L (83 aa).

The next 2 membrane-spanning stretches (helical) occupy residues 15–35 and 53–73; these read LLVL…VPLA and LGIY…APFL.

The protein belongs to the complex I NdhL subunit family. In terms of assembly, NDH-1 can be composed of about 15 different subunits; different subcomplexes with different compositions have been identified which probably have different functions.

Its subcellular location is the cellular thylakoid membrane. The catalysed reaction is a plastoquinone + NADH + (n+1) H(+)(in) = a plastoquinol + NAD(+) + n H(+)(out). The enzyme catalyses a plastoquinone + NADPH + (n+1) H(+)(in) = a plastoquinol + NADP(+) + n H(+)(out). Its function is as follows. NDH-1 shuttles electrons from an unknown electron donor, via FMN and iron-sulfur (Fe-S) centers, to quinones in the respiratory and/or the photosynthetic chain. The immediate electron acceptor for the enzyme in this species is believed to be plastoquinone. Couples the redox reaction to proton translocation, and thus conserves the redox energy in a proton gradient. Cyanobacterial NDH-1 also plays a role in inorganic carbon-concentration. This Synechococcus sp. (strain CC9605) protein is NAD(P)H-quinone oxidoreductase subunit L.